The chain runs to 398 residues: Acetate kinase (398 aa).

Position 7 (asparagine 7) interacts with Mg(2+). Lysine 14 lines the ATP pocket. Substrate is bound at residue arginine 90. Residue aspartate 147 is the Proton donor/acceptor of the active site. Residues 207–211 (HLGNG), 282–284 (DMR), and 330–334 (GIGEN) each bind ATP. Glutamate 383 provides a ligand contact to Mg(2+).

It belongs to the acetokinase family. Homodimer. It depends on Mg(2+) as a cofactor. Mn(2+) is required as a cofactor.

Its subcellular location is the cytoplasm. The catalysed reaction is acetate + ATP = acetyl phosphate + ADP. It participates in metabolic intermediate biosynthesis; acetyl-CoA biosynthesis; acetyl-CoA from acetate: step 1/2. In terms of biological role, catalyzes the formation of acetyl phosphate from acetate and ATP. Can also catalyze the reverse reaction. In Symbiobacterium thermophilum (strain DSM 24528 / JCM 14929 / IAM 14863 / T), this protein is Acetate kinase.